A 1564-amino-acid polypeptide reads, in one-letter code: TRKRFLKLKYYSIILQSRIRMIIAVTSYKRYLWATVTIQRHWRAYLRRKQDQQRYEMLKSSSLIIQAMFRRWKQRKMQLQVKATITLQRAFREWHLRKRAKEEKSAIVIQSWYRMHKQLRKYVYVRSCVVIIQKRFRCFQAQRLYKRKRESILTIQKYYRAYLKGKIERIHYLQKRAAAIQLQAAFKILKAHNLHRPIRAACVIQSYWRMRQDRVRFLNLKKNIIKLQAHVRKHQQLQKYKKIKKAAVIIQTHFQAYIFARKVLASYQKTRSAVIVLQSAYRGMQARKMYIHILTSVIKIQSYYRAYVSKKEFLSLKNATIKLQSIVKMKQTRKQYVHLRATALFIQQCYHSKKLAAQKREEYMQMRESCIKLQAFVRGYLVRKQIRLQRKAVISLQSYFRMRKARQYYLKMYKAVIIIQNYYHSYKAQVNQRKNFLRVKKAATCLQAAYRGYKVRQLIKQQSVAAVKIQSAFRGYSKRVKYLSVLQSIIKIQRWYRAYKTLYDIRTRFLKAKAAVISLQSAYRGWKVRKQIRREHQAAMKIQSAFRMAKAQKQFRLFKTAALVIQQHLRAWIAGRKQRMEYIELRHSVLMLQSMWKGKTLRRDLQRQHTCAVIIQSYYRMHVQQKKWKIMKEAALLIQKYYRACRIGREQHCLYLETKAAVLTLQSAYRGMKVRKRIKACNTAAITIQSKYRAYKTKKKYAAYRASAIIIQRWYRGIKITNHQYKEYLNLKKTAIKIQAVYRGIRVRRHIQHMHRAATFIKAMFKMHQPRIRYHTMRKATIVIQVRYRAYHQGKMQRENYLKILKAVNILQANFRGVRVRRTLRKLRIAATLIQSNYRRYRQQTYFNKLKKITRTVQQRYRAVKERNIQFQRYNKLRHSVIYIQALFRGMKARRHLKTMHIAATLIQRRFRALMLRRRFLSLKKTAIWIQRKYRAHLRTKRHLQFLRLQNAAIKIQSSYRRWMIRKKMREMHRAAAFIQATFRMHRVHMRYHALKQASVVIQQRYQANRAAKLQRQHYLRQRYSAVILQAAFRGMKTRRHLKSMYFSAILIQSRFRSLLVRRRFISLKKAAIFIQRKYRATICAKHKLRQFLQLRKAAITIQSSYRRLMVKKKLQEMHRAAVLIQATFRMHRTHITFQTWKHASILIQQHYRTYRASKLQRENYTKQWHSAVIIQAAYRGMKARQLLREKHKAAIIIQSTYRMYRQYCLYQKLQWATKIIQEKYRADKKKHKALQHTELRKAETCVQASFQDVNIEKLIQEQHQTSIIIQKHCKAFKIKKHYLHLRAPVVSIQRRYGKLTAVHTQAVICIQSYYRGFKVRRDIQNMHLAATRIQSFYRMHRAKVHYQTKKTAIVIIQNYYRLYVRVKTERKSFLAVQKSVRTIQAAFRGMKVRQKLKNIPKEKMAAIVDQSALYCYRSKGQDEAVRSEGVIIQEWCKASCLACSQEEYHSQSRAAVTIQKAFRRMITRKLETQKCATLRIQSFLRMAVYRRRRANSVQQKRAAVTLQHYFRMWQTRKQFLLYRKAAVVLQNHYRAFLSGKHQRQVYLQIRSSVIIIQARIKGF.

IQ domains lie at 31-60 (YLWA…MLKS), 220-251 (LKKN…VIIQ), 270-299 (TRSA…SVIK), 293-322 (ILTS…ATIK), 366-395 (MRES…AVIS), 389-420 (QRKA…IIIQ), 439-468 (VKKA…AAVK), 462-491 (QSVA…SIIK), 512-541 (AKAA…AAMK), 535-566 (EHQA…LVIQ), 608-639 (QHTC…LLIQ), 658-687 (TKAA…AAIT), 681-712 (CNTA…IIIQ), 731-762 (LKKT…TFIK), 754-785 (MHRA…IVIQ), 804-835 (ILKA…TLIQ), 827-856 (LRIA…ITRT), 877-908 (LRHS…TLIQ), 900-931 (MHIA…IWIQ), 949-980 (LQNA…AFIQ), 972-1003 (MHRA…VVIQ), 1022-1053 (QRYS…ILIQ), 1045-1076 (MYFS…IFIQ), 1095-1126 (LRKA…VLIQ), 1168-1199 (QWHS…IIIQ), 1304-1333 (HTQA…AATR), 1327-1358 (MHLA…VIIQ), 1377-1406 (VQKS…EKMA), 1452-1483 (QSRA…RIQS), 1474-1503 (QKCA…QKRA), and 1500-1531 (QKRA…VVLQ).

The protein resides in the cytoplasm. It is found in the nucleus. Probable role in mitotic spindle regulation and coordination of mitotic processes. May have a preferential role in regulating neurogenesis. The protein is Abnormal spindle-like microcephaly-associated protein homolog (ASPM) of Ateles geoffroyi (Black-handed spider monkey).